We begin with the raw amino-acid sequence, 586 residues long: Regulatory protein NPR3 (586 aa).

Position 10 is a phosphoserine (Ser-10). The 76-residue stretch at Ser-60–Pro-135 folds into the BTB domain. The C2HC NPR-type zinc finger occupies Val-138 to Arg-152. Residues Cys-141, Cys-146, His-148, and Cys-151 each contribute to the Zn(2+) site. 3 ANK repeats span residues Glu-261–Gln-291, Asn-293–Tyr-320, and Arg-324–Glu-353. A salicylic acid-binding core (SBC) region spans residues Glu-383–Leu-523. A salicylate-binding site is contributed by Arg-428. The interval Tyr-554–Thr-586 is disordered. The segment covering Ser-565–Ser-577 has biased composition (low complexity).

This sequence belongs to the plant 'ANKYRIN-BTB/POZ' family. 'NPR1-like' subfamily. As to quaternary structure, forms homodimers and heterodimers with NPR4 in the presence of salicylic acid (SA). Interacts with TGA2, TGA3, TGA5 and TGA6. Interacts with CUL3A, a core component of the cullin-RING ubiquitin ligases (CRL). Interacts with TGA2 in vivo in the nucleus. Binds to NPR1; this interaction is promoted by association with SA, probably due to conformational changes.

The protein localises to the nucleus. Its pathway is protein modification; protein ubiquitination. Functionally, salicylic acid (SA)-binding substrate-specific adapter of an E3 ubiquitin-protein ligase complex (CUL3-RBX1-BTB) which mediates the ubiquitination and subsequent proteasomal degradation of NPR1 in response to SA. Together with NPR4, acts as receptor of salicylic acid to monitor immunity in a NPR1-dependent manner and induce systemic acquired resistance (SAR). Involved in the regulation of basal defense responses against pathogens, and may be implicated in the cross-talk between the SA- and JA-dependent signaling pathways. The protein is Regulatory protein NPR3 of Arabidopsis thaliana (Mouse-ear cress).